The following is a 316-amino-acid chain: tRNA dimethylallyltransferase (316 aa).

17 to 24 (GPTASGKT) contacts ATP. 19 to 24 (TASGKT) is a substrate binding site. Interaction with substrate tRNA stretches follow at residues 42–45 (DSAL), 166–170 (QRLSR), and 247–252 (RCVGYR).

Belongs to the IPP transferase family. As to quaternary structure, monomer. It depends on Mg(2+) as a cofactor.

The enzyme catalyses adenosine(37) in tRNA + dimethylallyl diphosphate = N(6)-dimethylallyladenosine(37) in tRNA + diphosphate. In terms of biological role, catalyzes the transfer of a dimethylallyl group onto the adenine at position 37 in tRNAs that read codons beginning with uridine, leading to the formation of N6-(dimethylallyl)adenosine (i(6)A). In Salmonella enteritidis PT4 (strain P125109), this protein is tRNA dimethylallyltransferase.